The chain runs to 336 residues: HTH-type transcriptional repressor PurR (336 aa).

Residues 2-56 enclose the HTH lacI-type domain; sequence ATIKDVAKMAGVSTTTVSHVINKTRFVAKDTEEAVLSAIKQLNYSPSAVARSLKV. A DNA-binding region (H-T-H motif) is located at residues 4–23; sequence IKDVAKMAGVSTTTVSHVIN. The DNA-binding element occupies 48 to 56; that stretch reads SAVARSLKV. Positions 73, 188, 190, 219, and 273 each coordinate hypoxanthine.

In terms of assembly, homodimer.

It functions in the pathway purine metabolism; purine nucleotide biosynthesis [regulation]. Its function is as follows. Is the main repressor of the genes involved in the de novo synthesis of purine nucleotides, regulating purB, purC, purEK, purF, purHD, purL, purMN and guaBA expression. PurR is allosterically activated to bind its cognate DNA by binding the purine corepressors, hypoxanthine or guanine, thereby effecting transcription repression. This Haemophilus influenzae (strain PittGG) protein is HTH-type transcriptional repressor PurR.